The chain runs to 281 residues: sn-glycerol-3-phosphate transport system permease protein UgpE (281 aa).

The next 6 helical transmembrane spans lie at 16 to 36 (LILGIAVILFPLYVAFVAATL), 85 to 105 (FSITVGKITVSMLSAFAIVWF), 113 to 133 (FFWMIFITLMLPVEVRIFPTV), 142 to 162 (LDSYAGLTLPLMASATATFLF), 202 to 222 (ALFVITFIYGWNQYLWPLLII), and 247 to 267 (WNQVMAAMLLTLIPPVVIVLA). The ABC transmembrane type-1 domain maps to 77–268 (MLNSFIMAFS…IPPVVIVLAM (192 aa)).

It belongs to the binding-protein-dependent transport system permease family. UgpAE subfamily. In terms of assembly, the complex is composed of two ATP-binding proteins (UgpC), two transmembrane proteins (UgpA and UgpE) and a solute-binding protein (UgpB).

The protein localises to the cell inner membrane. Functionally, part of the ABC transporter complex UgpBAEC involved in sn-glycerol-3-phosphate (G3P) import. Probably responsible for the translocation of the substrate across the membrane. The polypeptide is sn-glycerol-3-phosphate transport system permease protein UgpE (ugpE) (Salmonella choleraesuis (strain SC-B67)).